We begin with the raw amino-acid sequence, 676 residues long: Potassium-transporting ATPase ATP-binding subunit (676 aa).

Transmembrane regions (helical) follow at residues 24–44 (NPVM…CFYP), 45–65 (MGIP…TLLF), 212–232 (IFLI…VPFT), and 246–266 (SLVI…GALI). Residue Asp302 is the 4-aspartylphosphate intermediate of the active site. ATP-binding positions include Asp339, Glu343, 372–379 (FSAKTRMS), and Lys390. Positions 513 and 517 each coordinate Mg(2+). Transmembrane regions (helical) follow at residues 573–593 (FSIA…FYSI), 611–631 (AILS…PLAL), and 656–676 (GIIA…LIIL).

This sequence belongs to the cation transport ATPase (P-type) (TC 3.A.3) family. Type IA subfamily. As to quaternary structure, the system is composed of three essential subunits: KdpA, KdpB and KdpC.

It localises to the cell membrane. The enzyme catalyses K(+)(out) + ATP + H2O = K(+)(in) + ADP + phosphate + H(+). Functionally, part of the high-affinity ATP-driven potassium transport (or Kdp) system, which catalyzes the hydrolysis of ATP coupled with the electrogenic transport of potassium into the cytoplasm. This subunit is responsible for energy coupling to the transport system and for the release of the potassium ions to the cytoplasm. The chain is Potassium-transporting ATPase ATP-binding subunit from Enterococcus faecalis (strain ATCC 700802 / V583).